The sequence spans 476 residues: Adenosylhomocysteinase (476 aa).

Substrate contacts are provided by Thr67, Asp142, and Glu202. 203–205 (TTT) is a binding site for NAD(+). Lys232 and Asp236 together coordinate substrate. NAD(+) contacts are provided by residues Asn237, 266–271 (GYGDVG), Glu289, Asn324, 345–347 (IGH), and Asn390.

The protein belongs to the adenosylhomocysteinase family. NAD(+) is required as a cofactor.

The protein localises to the cytoplasm. The catalysed reaction is S-adenosyl-L-homocysteine + H2O = L-homocysteine + adenosine. It participates in amino-acid biosynthesis; L-homocysteine biosynthesis; L-homocysteine from S-adenosyl-L-homocysteine: step 1/1. Its function is as follows. May play a key role in the regulation of the intracellular concentration of adenosylhomocysteine. The polypeptide is Adenosylhomocysteinase (Parasynechococcus marenigrum (strain WH8102)).